The following is a 227-amino-acid chain: PKHD-type hydroxylase BPSS1206 (227 aa).

Residues 78–178 (KVFPPLFNRY…RVASFFWIQS (101 aa)) form the Fe2OG dioxygenase domain. The Fe cation site is built by histidine 96, aspartate 98, and histidine 159. Position 169 (arginine 169) interacts with 2-oxoglutarate.

It depends on Fe(2+) as a cofactor. L-ascorbate is required as a cofactor.

The chain is PKHD-type hydroxylase BPSS1206 from Burkholderia pseudomallei (strain K96243).